A 414-amino-acid chain; its full sequence is F-box protein At3g47030 (414 aa).

A disordered region spans residues 1 to 24 (MSGMLGLSAVMGKRPKQQVTARPR). The region spanning 28–77 (IEKPEEIPDDLLIDVFSRLSIEDVARCRCLSRFWSSILRRRYFTELFHKM) is the F-box domain.

The protein is F-box protein At3g47030 of Arabidopsis thaliana (Mouse-ear cress).